The following is a 457-amino-acid chain: Chromosomal replication initiator protein DnaA (457 aa).

Residues 1 to 90 (MDTNNNIEKE…HSVDVRIEVA (90 aa)) are domain I, interacts with DnaA modulators. Residues 91–112 (PKIQINAQSNINYKAIKTSVKD) form a domain II region. Positions 113 to 323 (SYTFENFVVG…GAIIKISVNA (211 aa)) are domain III, AAA+ region. ATP-binding residues include Gly-153, Gly-155, Lys-156, and Thr-157. A domain IV, binds dsDNA region spans residues 324–457 (NLMNASIDLN…DKKTAFNSSE (134 aa)).

Belongs to the DnaA family. As to quaternary structure, oligomerizes as a right-handed, spiral filament on DNA at oriC. Interacts via domain I with HobA. In a crystal with domains I and II of DnaA HobA forms tetramers with DnaA fragments bound at the dimer interface of the tetramer.

The protein localises to the cytoplasm. It localises to the cell inner membrane. Plays an essential role in the initiation and regulation of chromosomal replication. ATP-DnaA binds to the origin of replication (oriC) to initiate formation of the DNA replication initiation complex once per cell cycle. Binds the DnaA box (a 9 base pair repeat at the origin) and separates the double-stranded (ds)DNA. Forms a right-handed helical filament on oriC DNA; dsDNA binds to the exterior of the filament while single-stranded (ss)DNA is stabiized in the filament's interior. The ATP-DnaA-oriC complex binds and stabilizes one strand of the AT-rich DNA unwinding element (DUE), permitting loading of DNA polymerase. After initiation quickly degrades to an ADP-DnaA complex that is not apt for DNA replication. Binds acidic phospholipids. Its function is as follows. The DnaA box is 5'-TTATC[CA]A[CA]A-3' in this bacterium cycle. Multiple discrete DnaA-oriC complexes can be seen as DnaA levels increase. Binding of DnaA to oriC is increased by HobA; some chi-type structures can be seen by electron microscopy. Strand separation requires the DnaA boxes and adjacent DnaA-trio motifs but works equally well with ADP or ATP. The sequence is that of Chromosomal replication initiator protein DnaA from Helicobacter pylori (strain ATCC 700392 / 26695) (Campylobacter pylori).